The primary structure comprises 257 residues: NAD kinase (257 aa).

D46 acts as the Proton acceptor in catalysis. NAD(+)-binding positions include 46-47 (DG), 116-117 (NE), D146, A154, and 157-162 (TAYNLS).

The protein belongs to the NAD kinase family. The cofactor is a divalent metal cation.

Its subcellular location is the cytoplasm. The enzyme catalyses NAD(+) + ATP = ADP + NADP(+) + H(+). Functionally, involved in the regulation of the intracellular balance of NAD and NADP, and is a key enzyme in the biosynthesis of NADP. Catalyzes specifically the phosphorylation on 2'-hydroxyl of the adenosine moiety of NAD to yield NADP. This chain is NAD kinase, found in Mesorhizobium japonicum (strain LMG 29417 / CECT 9101 / MAFF 303099) (Mesorhizobium loti (strain MAFF 303099)).